The chain runs to 629 residues: Chaperone protein HtpG (629 aa).

The a; substrate-binding stretch occupies residues 1 to 337; that stretch reads MAASKETMQF…SSDLPLNVSR (337 aa). A b region spans residues 338-554; sequence EILQGNRVID…ERDMALYMQQ (217 aa). Residues 555-629 form a c region; sequence LLKQAGHEIS…INQLMLALAG (75 aa).

Belongs to the heat shock protein 90 family. As to quaternary structure, homodimer.

The protein resides in the cytoplasm. Functionally, molecular chaperone. Has ATPase activity. This chain is Chaperone protein HtpG, found in Acidithiobacillus ferrooxidans (strain ATCC 23270 / DSM 14882 / CIP 104768 / NCIMB 8455) (Ferrobacillus ferrooxidans (strain ATCC 23270)).